We begin with the raw amino-acid sequence, 291 residues long: Meteorin (291 aa).

A signal peptide spans 1–21 (MLVATLLCALCCGLLAASAHA). 5 disulfide bridges follow: Cys28–Cys49, Cys80–Cys116, Cys169–Cys240, Cys172–Cys264, and Cys182–Cys286.

The protein belongs to the meteorin family. As to quaternary structure, monomer. In terms of tissue distribution, highly expressed in brain. Expressed in undifferentiated neural progenitors and in astrocyte lineage, particularly in Bergmann glia, a subtype of radial glia, and a few discrete neuronal populations residing in the superior colliculus, the ocular motor nucleus, the raphe and pontine nuclei, and in various thalamic nuclei. Weakly expressed in heart, kidney, skeletal muscle, spleen, testis, gut and lung.

The protein resides in the secreted. Functionally, involved in both glial cell differentiation and axonal network formation during neurogenesis. Promotes astrocyte differentiation and transforms cerebellar astrocytes into radial glia. Also induces axonal extension in small and intermediate neurons of sensory ganglia by activating nearby satellite glia. The protein is Meteorin (Metrn) of Mus musculus (Mouse).